Here is a 423-residue protein sequence, read N- to C-terminus: Cytochrome b mRNA maturase bI2 (423 aa).

At 1 to 31 the chain is on the mitochondrial matrix side; sequence MAFRKSNVYLSLVNSYIIDSPQPSSINYWWN. The segment at 1 to 143 is cytochrome b; that stretch reads MAFRKSNVYL…CVYGQMSHWG (143 aa). Residues 32-52 traverse the membrane as a helical segment; sequence MGSLLGLCLVIQIVTGIFMAM. The Mitochondrial intermembrane portion of the chain corresponds to 53 to 84; sequence HYSSNIELAFSSVEHIMRDVHNGYILRYLHAN. Residues 85–105 traverse the membrane as a helical segment; that stretch reads GASFFFMVMFMHMAKGLYYGS. The Mitochondrial matrix segment spans residues 106 to 115; it reads YRSPRVTLWN. The chain crosses the membrane as a helical span at residues 116–136; the sequence is VGVIIFILTIATAFLGYCCVY. Topologically, residues 137–153 are mitochondrial intermembrane; the sequence is GQMSHWGNMNIASNMFN. Residues 144-423 form a maturase region; it reads NMNIASNMFN…SMKYKLGNYL (280 aa). The chain crosses the membrane as a helical span at residues 154–174; it reads MMKTIYMMMLMLLIYIFYTIM. Topologically, residues 175-423 are mitochondrial matrix; sequence MRQMMKTKEY…SMKYKLGNYL (249 aa).

In the N-terminal section; belongs to the cytochrome b family. It in the C-terminal section; belongs to the LAGLIDADG endonuclease family.

The protein resides in the mitochondrion inner membrane. Functionally, this protein is responsible for splicing and maturation of cytochrome b mRNA. Specifically, it may be responsible for the splicing specificity of the second intron. In Saccharomyces cerevisiae (strain ATCC 204508 / S288c) (Baker's yeast), this protein is Cytochrome b mRNA maturase bI2 (BI2).